Consider the following 162-residue polypeptide: Dihydrofolate reductase type 3 (162 aa).

A DHFR domain is found at 2 to 160 (LISLIAALAH…YACEFVTLSR (159 aa)).

Belongs to the dihydrofolate reductase family. As to quaternary structure, monomer.

The catalysed reaction is (6S)-5,6,7,8-tetrahydrofolate + NADP(+) = 7,8-dihydrofolate + NADPH + H(+). It participates in cofactor biosynthesis; tetrahydrofolate biosynthesis; 5,6,7,8-tetrahydrofolate from 7,8-dihydrofolate: step 1/1. Its function is as follows. Key enzyme in folate metabolism. Catalyzes an essential reaction for de novo glycine and purine synthesis, and for DNA precursor synthesis. The protein is Dihydrofolate reductase type 3 (dhfrIII) of Salmonella typhimurium.